Reading from the N-terminus, the 691-residue chain is Solute carrier organic anion transporter family member 1B1 (691 aa).

The Cytoplasmic portion of the chain corresponds to M1–K28. The chain crosses the membrane as a helical span at residues M29–M48. Residues K49–G67 are Extracellular-facing. A helical transmembrane segment spans residues F68 to G88. At S89–P94 the chain is on the cytoplasmic side. The chain crosses the membrane as a helical span at residues K95–G119. Residues Y120–S168 lie on the Extracellular side of the membrane. N-linked (GlcNAc...) asparagine glycans are attached at residues N130 and N134. The chain crosses the membrane as a helical span at residues Y169–D197. Topologically, residues D198–A216 are cytoplasmic. A helical membrane pass occupies residues M217 to I237. The Extracellular portion of the chain corresponds to G238–V255. A helical membrane pass occupies residues G256–P280. Residues Q281–S331 are Cytoplasmic-facing. Phosphoserine is present on residues S293 and S295. The helical transmembrane segment at I332 to I353 threads the bilayer. The Extracellular portion of the chain corresponds to G354–K373. Residues A374–I397 form a helical membrane-spanning segment. Residues K398–K401 are Cytoplasmic-facing. A helical transmembrane segment spans residues L402–Y425. Residues F426–F537 lie on the Extracellular side of the membrane. An N-linked (GlcNAc...) asparagine glycan is attached at N432. A Kazal-like domain is found at D453 to E508. 3 disulfide bridges follow: C459-C489, C465-C485, and C474-C506. Residues N503 and N516 are each glycosylated (N-linked (GlcNAc...) asparagine). A helical transmembrane segment spans residues V538–V560. Topologically, residues K561–S569 are cytoplasmic. Residues L570–I595 traverse the membrane as a helical segment. Residues D596 to S629 are Extracellular-facing. A glycan (N-linked (GlcNAc...) asparagine) is linked at N617. Residues S630–M647 form a helical membrane-spanning segment. Over K648–C691 the chain is Cytoplasmic. S672 and S682 each carry phosphoserine.

It belongs to the organo anion transporter (TC 2.A.60) family. Highly expressed in liver, at the basolateral membranes of centrilobular hepatocytes. Expressed in liver (at protein level). Expressed in fetal liver. Not detected in heart, brain, placenta, lung, skeletal muscle, kidney, pancreas, spleen, thymus, prostate, testis, ovary, small intestine, colon and leukocyte. In testis, primarily localized to the basal membrane of Sertoli cells and weakly expressed in Leydig cells and within the tubules.

Its subcellular location is the basolateral cell membrane. It localises to the basal cell membrane. The enzyme catalyses taurocholate(out) = taurocholate(in). The catalysed reaction is dehydroepiandrosterone 3-sulfate(out) = dehydroepiandrosterone 3-sulfate(in). It catalyses the reaction estrone 3-sulfate(out) = estrone 3-sulfate(in). It carries out the reaction 3,3',5'-triiodo-L-thyronine(out) = 3,3',5'-triiodo-L-thyronine(in). The enzyme catalyses L-thyroxine(out) = L-thyroxine(in). The catalysed reaction is prostaglandin E2(out) = prostaglandin E2(in). It catalyses the reaction thromboxane B2(out) = thromboxane B2(in). It carries out the reaction 17beta-estradiol 17-O-(beta-D-glucuronate)(out) = 17beta-estradiol 17-O-(beta-D-glucuronate)(in). The enzyme catalyses leukotriene C4(out) = leukotriene C4(in). The catalysed reaction is leukotriene E4(out) = leukotriene E4(in). It catalyses the reaction (4E,15E)-bilirubin IXalpha C8-beta-D-glucuronoside(out) = (4E,15E)-bilirubin IXalpha C8-beta-D-glucuronoside(in). It carries out the reaction bilirubin IXalpha bis-beta-D-glucuronoside(out) = bilirubin IXalpha bis-beta-D-glucuronoside(in). Its function is as follows. Mediates the Na(+)-independent uptake of organic anions. Shows broad substrate specificity, can transport both organic anions such as bile acid taurocholate (cholyltaurine) and conjugated steroids (dehydroepiandrosterone 3-sulfate, 17-beta-glucuronosyl estradiol, and estrone 3-sulfate), as well as eicosanoids (prostaglandin E2, thromboxane B2, leukotriene C4, and leukotriene E4), and thyroid hormones (T4/L-thyroxine, and T3/3,3',5'-triiodo-L-thyronine). Can take up bilirubin glucuronides from plasma into the liver, contributing to the detoxification-enhancing liver-blood shuttling loop. Involved in the clearance of endogenous and exogenous substrates from the liver. Transports coproporphyrin I and III, by-products of heme synthesis, and may be involved in their hepatic disposition. May contribute to regulate the transport of organic compounds in testes across the blood-testis-barrier. Can transport HMG-CoA reductase inhibitors (also known as statins), such as pravastatin and pitavastatin, a clinically important class of hypolipidemic drugs. May play an important role in plasma and tissue distribution of the structurally diverse chemotherapeutic drug methotrexate. May also transport antihypertension agents, such as the angiotensin-converting enzyme (ACE) inhibitor prodrug enalapril, and the highly selective angiotensin II AT1-receptor antagonist valsartan, in the liver. Shows a pH-sensitive substrate specificity towards prostaglandin E2 and T4 which may be ascribed to the protonation state of the binding site and leads to a stimulation of substrate transport in an acidic microenvironment. Hydrogencarbonate/HCO3(-) acts as the probable counteranion that exchanges for organic anions. This Homo sapiens (Human) protein is Solute carrier organic anion transporter family member 1B1 (SLCO1B1).